Consider the following 430-residue polypeptide: Small ribosomal subunit protein uS5m (430 aa).

The S5 DRBM domain maps to 218 to 282 (FDTRILEVRN…NRAVHHLHYI (65 aa)).

It belongs to the universal ribosomal protein uS5 family. As to quaternary structure, component of the mitochondrial small ribosomal subunit (mt-SSU). Mature mammalian 55S mitochondrial ribosomes consist of a small (28S) and a large (39S) subunit. The 28S small subunit contains a 12S ribosomal RNA (12S mt-rRNA) and 30 different proteins. The 39S large subunit contains a 16S rRNA (16S mt-rRNA), a copy of mitochondrial valine transfer RNA (mt-tRNA(Val)), which plays an integral structural role, and 52 different proteins.

It is found in the mitochondrion. The sequence is that of Small ribosomal subunit protein uS5m (MRPS5) from Homo sapiens (Human).